The primary structure comprises 270 residues: NAD kinase (270 aa).

The Proton acceptor role is filled by aspartate 49. NAD(+) is bound by residues 49–50, arginine 54, 126–127, arginine 152, aspartate 154, 165–170, alanine 189, and glutamine 227; these read DG, NE, and TAYNKS.

Belongs to the NAD kinase family. Requires a divalent metal cation as cofactor.

It localises to the cytoplasm. It catalyses the reaction NAD(+) + ATP = ADP + NADP(+) + H(+). Its function is as follows. Involved in the regulation of the intracellular balance of NAD and NADP, and is a key enzyme in the biosynthesis of NADP. Catalyzes specifically the phosphorylation on 2'-hydroxyl of the adenosine moiety of NAD to yield NADP. The sequence is that of NAD kinase from Lactococcus lactis subsp. cremoris (strain MG1363).